Consider the following 304-residue polypeptide: MAPPVPAPSSDLPNIAPRDKAEILAQALPYIRKFHGKTLVIKYGGNAMTDPALQQDFAEDIVLLKLVGMNPVVVHGGGPQIDEALSRLGKKGTFIQGMRVTDEETMEVVEWVLGGEVQQDIVGLINAVGGKAVGLTGRDGGMIRARKLKMVDKDDPSIEHDVGQVGEITAIDPAVVKALQDDQFIPVVSPIGFGEHNESYNINADMVASKLATVLQAEKLMLLTNTPGVLDKAGKLLTNLSAREIDELFADGTISGGMLPKIAGALDAAKSGVNAVHIIDGRVPHAMLLEILSDQAYGTMIRSH.

Substrate-binding positions include 77–78, Arg99, and Asn201; that span reads GG.

It belongs to the acetylglutamate kinase family. ArgB subfamily.

The protein resides in the cytoplasm. It carries out the reaction N-acetyl-L-glutamate + ATP = N-acetyl-L-glutamyl 5-phosphate + ADP. Its pathway is amino-acid biosynthesis; L-arginine biosynthesis; N(2)-acetyl-L-ornithine from L-glutamate: step 2/4. Its function is as follows. Catalyzes the ATP-dependent phosphorylation of N-acetyl-L-glutamate. The chain is Acetylglutamate kinase from Methylibium petroleiphilum (strain ATCC BAA-1232 / LMG 22953 / PM1).